The chain runs to 190 residues: MTVGTLPIWSKTFSYAIRSLCFLHIIHMYAYEFTETRGESMLPTLSATNDYVHVLKNFQNGRGIKMGDCIVALKPTDPNHRICKRVTGMPGDLVLVDPSTIVNYVGDVLVDEERFGTYIKVPEGHVWVTGDNLSHSLDSRTYNALPMGLIMGKIVAANNFDKPFWDGSIRNIWGFKWINNTFLDVQAKSN.

Catalysis depends on residues Ser-40 and Lys-84.

This sequence belongs to the peptidase S26 family. IMP1 subfamily. As to quaternary structure, component of the mitochondrial inner membrane peptidase (IMP) complex which at least consists of IMP1, IMP2 and SOM1.

Its subcellular location is the mitochondrion inner membrane. In terms of biological role, catalytic component of the mitochondrial inner membrane peptidase (IMP) complex. IMP catalyzes the removal of signal peptides required for the targeting of proteins from the mitochondrial matrix, across the inner membrane, into the inter-membrane space. The two catalytic IMP subunits seem to have non-overlapping substrate specificities. IMP1 substrates include nuclear encoded CYB2, mitochondrially encoded COX2, NADH-cytochrome b5 reductase and GUT2. In Saccharomyces cerevisiae (strain ATCC 204508 / S288c) (Baker's yeast), this protein is Mitochondrial inner membrane protease subunit 1 (IMP1).